The following is a 175-amino-acid chain: Large ribosomal subunit protein uL10 (175 aa).

It belongs to the universal ribosomal protein uL10 family. As to quaternary structure, part of the ribosomal stalk of the 50S ribosomal subunit. The N-terminus interacts with L11 and the large rRNA to form the base of the stalk. The C-terminus forms an elongated spine to which L12 dimers bind in a sequential fashion forming a multimeric L10(L12)X complex.

In terms of biological role, forms part of the ribosomal stalk, playing a central role in the interaction of the ribosome with GTP-bound translation factors. The chain is Large ribosomal subunit protein uL10 from Mycobacterium sp. (strain JLS).